Here is a 217-residue protein sequence, read N- to C-terminus: Ras-related protein RABA1e (217 aa).

A GTP-binding site is contributed by 20 to 27; it reads GDSGVGKS. The Effector region motif lies at 42 to 50; sequence SKSTIGVEF. GTP contacts are provided by residues 68-72, 126-129, and 156-157; these read DTAGQ, NKAD, and SA. Residues cysteine 214 and cysteine 215 are each lipidated (S-geranylgeranyl cysteine).

It belongs to the small GTPase superfamily. Rab family.

The protein localises to the cell membrane. Its function is as follows. Intracellular vesicle trafficking and protein transport. In Arabidopsis thaliana (Mouse-ear cress), this protein is Ras-related protein RABA1e (RABA1E).